A 278-amino-acid polypeptide reads, in one-letter code: MDVRQSIHSEHAKTLDTQALRREFLIENIFVADEYTMVYSHIDRIIVGGIMPVSHPVEIGGEVGKQLGVSRLLDRRELGVINIGGAGAIIVDGQRHDIGHRDALYIGKGAKELVFVSNEASRPAKFYYNCAPAHTAYPTKKVSPADVAPVTLGDNLTSNRRTINKYFVPDVLETCQLSMGLTELAPGNLWNTMPCHTHERRMEVYLYFNMEEDSCVFHMMGQPQETRHIVMRNEQAVISPSWSIHSGVGTKAYTFIWGMVGENQVFDDMDHVAVQDLR.

The Zn(2+) site is built by histidine 196, histidine 198, glutamate 203, and histidine 245.

This sequence belongs to the KduI family. Zn(2+) serves as cofactor.

The enzyme catalyses 5-dehydro-4-deoxy-D-glucuronate = 3-deoxy-D-glycero-2,5-hexodiulosonate. Its pathway is glycan metabolism; pectin degradation; 2-dehydro-3-deoxy-D-gluconate from pectin: step 4/5. Catalyzes the isomerization of 5-dehydro-4-deoxy-D-glucuronate to 3-deoxy-D-glycero-2,5-hexodiulosonate. This Salmonella agona (strain SL483) protein is 4-deoxy-L-threo-5-hexosulose-uronate ketol-isomerase.